A 282-amino-acid chain; its full sequence is Acetyl-coenzyme A carboxylase carboxyl transferase subunit beta 1 (282 aa).

The CoA carboxyltransferase N-terminal domain occupies 23–282 (LMTKCPECRH…MHTKGGVQHV (260 aa)). The Zn(2+) site is built by Cys-27, Cys-30, Cys-46, and Cys-49. The C4-type zinc finger occupies 27–49 (CPECRHILLTKELEKNHKVCTKC).

Belongs to the AccD/PCCB family. In terms of assembly, acetyl-CoA carboxylase is a heterohexamer composed of biotin carboxyl carrier protein (AccB), biotin carboxylase (AccC) and two subunits each of ACCase subunit alpha (AccA) and ACCase subunit beta (AccD). It depends on Zn(2+) as a cofactor.

It is found in the cytoplasm. The catalysed reaction is N(6)-carboxybiotinyl-L-lysyl-[protein] + acetyl-CoA = N(6)-biotinyl-L-lysyl-[protein] + malonyl-CoA. It participates in lipid metabolism; malonyl-CoA biosynthesis; malonyl-CoA from acetyl-CoA: step 1/1. Its function is as follows. Component of the acetyl coenzyme A carboxylase (ACC) complex. Biotin carboxylase (BC) catalyzes the carboxylation of biotin on its carrier protein (BCCP) and then the CO(2) group is transferred by the transcarboxylase to acetyl-CoA to form malonyl-CoA. The protein is Acetyl-coenzyme A carboxylase carboxyl transferase subunit beta 1 of Lysinibacillus sphaericus (strain C3-41).